Reading from the N-terminus, the 165-residue chain is GPI-anchored protein LORELEI (165 aa).

Residues Met1 to Ser20 form the signal peptide. Residues Pro82–Asp93 form a required for its function in pollen tube reception region. Asn137 carries N-linked (GlcNAc...) asparagine glycosylation. Residue Ser139 is the site of GPI-anchor amidated serine attachment. The propeptide at Thr140–Thr165 is removed in mature form.

Interacts with FER. In terms of tissue distribution, expressed in leaves, buds, flowers and stems. Highest expression in the synergid cells of the female gametophyte.

It is found in the cell membrane. Female gametophyte-specific component of the signaling pathway required for fertilization. Required for reception of the pollen tube by the female gametophyte. Acts specifically at the synergid cell surface for pollen tube reception. Plays a role in double fertilization and early seed development. Component of the FER-regulated Rho GTPase signaling complex. Acts as a chaperone and coreceptor for FER. Required for localization of FER to the plasma membrane. In Arabidopsis thaliana (Mouse-ear cress), this protein is GPI-anchored protein LORELEI (LRE).